The primary structure comprises 201 residues: Recombination protein RecR (201 aa).

The C4-type zinc finger occupies 57–72 (CADCRTFTEQEKCNIC). The 96-residue stretch at 81-176 (GQICVVESPA…DASRIAHGVP (96 aa)) folds into the Toprim domain.

Belongs to the RecR family.

In terms of biological role, may play a role in DNA repair. It seems to be involved in an RecBC-independent recombinational process of DNA repair. It may act with RecF and RecO. This Cronobacter sakazakii (strain ATCC BAA-894) (Enterobacter sakazakii) protein is Recombination protein RecR.